Reading from the N-terminus, the 885-residue chain is Cadherin-1 (885 aa).

The first 26 residues, M1 to C26, serve as a signal peptide directing secretion. Residues Q27 to R156 constitute a propeptide that is removed on maturation. Over residues K121 to H131 the composition is skewed to basic residues. The tract at residues K121–V141 is disordered. The Extracellular portion of the chain corresponds to D157–A712. Cadherin domains follow at residues W158–F264, T265–F377, N378–F488, I489–P597, and K607–C688. A Ca(2+)-binding site is contributed by D259. S282 is a glycosylation site (O-linked (Man...) serine). T287 carries O-linked (Man...) threonine glycosylation. D290 is a Ca(2+) binding site. O-linked (Man...) threonine glycosylation is found at T360, T472, T474, and T511. N560 carries N-linked (GlcNAc...) asparagine glycosylation. 3 O-linked (Man...) threonine glycosylation sites follow: T578, T580, and T582. N639 carries an N-linked (GlcNAc...) asparagine glycan. Residues I713 to F733 traverse the membrane as a helical segment. The Cytoplasmic segment spans residues V734–D885. The disordered stretch occupies residues D750–F770. Phosphotyrosine; by SRC occurs at positions 756, 757, and 758. The span at Y758–F770 shows a compositional bias: acidic residues. Residues E761 to L772 form a required for binding CTNND1 and PSEN1 region. Phosphoserine is present on residues S773, S796, S841, S843, and S849. A disordered region spans residues P792–G811. The required for binding alpha, beta and gamma catenins stretch occupies residues I814–D885.

As to quaternary structure, homodimer; disulfide-linked. Component of an E-cadherin/ catenin adhesion complex composed of at least E-cadherin/CDH1, beta-catenin/CTNNB1 or gamma-catenin/JUP, and potentially alpha-catenin/CTNNA1; the complex is located to adherens junctions. Found in a complex composed of CDH1, RAP1A and PKP3; PKP3 acts as a scaffold protein within the complex, the complex is required for CDH1 localization to mature desmosome cell junctions. Interacts with the TRPV4 and CTNNB1 complex. Interacts with CTNND1. The stable association of CTNNA1 is controversial as CTNNA1 was shown not to bind to F-actin when assembled in the complex. Alternatively, the CTNNA1-containing complex may be linked to F-actin by other proteins such as LIMA1. Interaction with PSEN1, cleaves CDH1 resulting in the disassociation of cadherin-based adherens junctions (CAJs). Interacts with AJAP1 and DLGAP5. Interacts with TBC1D2. Interacts with LIMA1. Interacts with CAV1. Interacts with PIP5K1C. Interacts with RAB8B. Interacts with DDR1; this stabilizes CDH1 at the cell surface and inhibits its internalization. Interacts with RAPGEF2. Interacts with KLRG1. Forms a ternary complex composed of ADAM10, CADH1 and EPHA4; within the complex, CADH1 is cleaved by ADAM10 which disrupts adherens junctions. Interacts with SPEF1. Interacts with CTNNB1 and PKP2. Interacts with AMOTL2; the interaction may facilitate binding of radial actin fibers to cell junction complexes. Interacts with DSG3; the interaction is required for CDH1 localization to developing adherens junctions. Post-translationally, during apoptosis or with calcium influx, cleaved by a membrane-bound metalloproteinase (ADAM10), PS1/gamma-secretase and caspase-3. Processing by the metalloproteinase, induced by calcium influx, causes disruption of cell-cell adhesion and the subsequent release of beta-catenin into the cytoplasm. The residual membrane-tethered cleavage product is rapidly degraded via an intracellular proteolytic pathway. Cleavage by caspase-3 releases the cytoplasmic tail resulting in disintegration of the actin microfilament system. The gamma-secretase-mediated cleavage promotes disassembly of adherens junctions. During development of the cochlear organ of Corti, cleavage by ADAM10 at adherens junctions promotes pillar cell separation. N-glycosylation at Asn-639 is essential for expression, folding and trafficking. Addition of bisecting N-acetylglucosamine by MGAT3 modulates its cell membrane location. In terms of processing, ubiquitinated by a SCF complex containing SKP2, which requires prior phosphorylation by CK1/CSNK1A1. Ubiquitinated by CBLL1/HAKAI, requires prior phosphorylation at Tyr-757. Post-translationally, O-glycosylated. O-manosylated by TMTC1, TMTC2, TMTC3 or TMTC4. Thr-287 and Thr-511 are O-mannosylated by TMTC2 or TMTC4 but not TMTC1 or TMTC3.

It localises to the cell junction. The protein localises to the adherens junction. Its subcellular location is the cell membrane. It is found in the endosome. The protein resides in the golgi apparatus. It localises to the trans-Golgi network. The protein localises to the cytoplasm. Its subcellular location is the desmosome. Its function is as follows. Cadherins are calcium-dependent cell adhesion proteins. They preferentially interact with themselves in a homophilic manner in connecting cells; cadherins may thus contribute to the sorting of heterogeneous cell types. CDH1 is involved in mechanisms regulating cell-cell adhesions, mobility and proliferation of epithelial cells. Promotes organization of radial actin fiber structure and cellular response to contractile forces, via its interaction with AMOTL2 which facilitates anchoring of radial actin fibers to CDH1 junction complexes at the cell membrane. Plays a role in the early stages of desmosome cell-cell junction formation via facilitating the recruitment of DSG2 and DSP to desmosome plaques. Has a potent invasive suppressor role. It is a ligand for integrin alpha-E/beta-7. Functionally, E-Cad/CTF2 promotes non-amyloidogenic degradation of Abeta precursors. Has a strong inhibitory effect on APP C99 and C83 production. This Canis lupus familiaris (Dog) protein is Cadherin-1 (CDH1).